A 300-amino-acid chain; its full sequence is Mycothiol acetyltransferase (300 aa).

N-acetyltransferase domains follow at residues 4-140 (IDWR…RPLT) and 151-300 (VRLA…AVAD). Aspartate 36 is a binding site for 1D-myo-inositol 2-(L-cysteinylamino)-2-deoxy-alpha-D-glucopyranoside. 79–81 (LVV) serves as a coordination point for acetyl-CoA. 1D-myo-inositol 2-(L-cysteinylamino)-2-deoxy-alpha-D-glucopyranoside is bound by residues glutamate 178, lysine 219, and glutamate 227. 231–233 (VGV) serves as a coordination point for acetyl-CoA. Tyrosine 269 is a 1D-myo-inositol 2-(L-cysteinylamino)-2-deoxy-alpha-D-glucopyranoside binding site. Residue 274-279 (NGAAVK) coordinates acetyl-CoA.

Belongs to the acetyltransferase family. MshD subfamily. Monomer.

The catalysed reaction is 1D-myo-inositol 2-(L-cysteinylamino)-2-deoxy-alpha-D-glucopyranoside + acetyl-CoA = mycothiol + CoA + H(+). In terms of biological role, catalyzes the transfer of acetyl from acetyl-CoA to desacetylmycothiol (Cys-GlcN-Ins) to form mycothiol. In Mycobacterium sp. (strain JLS), this protein is Mycothiol acetyltransferase.